We begin with the raw amino-acid sequence, 69 residues long: Sec-independent protein translocase protein TatA (69 aa).

A helical transmembrane segment spans residues 1–21; sequence MGSLSIWHWLIVLAIALLLFG. The disordered stretch occupies residues 41-69; that stretch reads KGMNDDEETPPPAQSTTSRTVEHKADESK. The span at 60–69 shows a compositional bias: basic and acidic residues; the sequence is TVEHKADESK.

It belongs to the TatA/E family. The Tat system comprises two distinct complexes: a TatABC complex, containing multiple copies of TatA, TatB and TatC subunits, and a separate TatA complex, containing only TatA subunits. Substrates initially bind to the TatABC complex, which probably triggers association of the separate TatA complex to form the active translocon.

Its subcellular location is the cell inner membrane. In terms of biological role, part of the twin-arginine translocation (Tat) system that transports large folded proteins containing a characteristic twin-arginine motif in their signal peptide across membranes. TatA could form the protein-conducting channel of the Tat system. The chain is Sec-independent protein translocase protein TatA from Rhizobium rhizogenes (strain K84 / ATCC BAA-868) (Agrobacterium radiobacter).